The sequence spans 582 residues: Protein LYRIC (582 aa).

At 1-48 (MAARSWQDELAQQAEEGSARLREMLSVGLGFLRTELGLDLGLEPKRYP) the chain is on the lumenal side. The tract at residues 1–71 (MAARSWQDEL…LLLFLLGYGW (71 aa)) is activation of NF-kappa-B. Residues 49–69 (GWVILVGTGALGLLLLFLLGY) traverse the membrane as a helical segment. Over 70 to 582 (GWAAACAGAR…KKKKKARRET (513 aa)) the chain is Cytoplasmic. The segment at 72-169 (AAACAGARKK…EKSKKNKKKS (98 aa)) is interaction with BCCIP. The tract at residues 78 to 222 (ARKKRRSPPR…DSGSLDSTIP (145 aa)) is disordered. A compositionally biased stretch (low complexity) spans 93 to 106 (AAVPAAAPDDLALL). The interaction with RELA stretch occupies residues 101-205 (DDLALLKNLR…ISHREKRQQR (105 aa)). Basic and acidic residues predominate over residues 109–127 (LRSEEQKKKNRKKLSEKPK). Residue Thr-143 is modified to Phosphothreonine. Over residues 160–169 (EKSKKNKKKS) the composition is skewed to basic residues. Phosphoserine is present on Ser-180. A compositionally biased stretch (basic residues) spans 198-208 (HREKRQQRKRD). Ser-216 and Ser-251 each carry phosphoserine. Lys-264 is subject to N6-acetyllysine. Residues 280-582 (TVNGGGWNEK…KKKKKARRET (303 aa)) are disordered. Ser-298, Ser-306, Ser-308, Ser-311, Ser-323, Ser-339, Ser-344, and Ser-369 each carry phosphoserine. Positions 320–333 (SAWSQDTGDANTNG) are enriched in polar residues. Polar residues-rich tracts occupy residues 354 to 372 (EPVSQSTTSDYQWDVSRNQ) and 383 to 394 (NGLSSADPNSDW). The segment at 381–443 (GLNGLSSADP…EGALPTGKSK (63 aa)) is lung-homing for mammary tumors. Residues Ser-415 and Ser-426 each carry the phosphoserine modification. Basic and acidic residues predominate over residues 421-434 (DDQKVSDDDKEKGE). Residues 441-451 (KSKKKKKKKKK) are compositionally biased toward basic residues. Residue Ser-457 is modified to Phosphoserine. Thr-458 is subject to Phosphothreonine. Phosphoserine occurs at positions 478, 494, and 496. 2 stretches are compositionally biased toward polar residues: residues 504–520 (KNSQPIKTLPPATSTEP) and 549–568 (NTKQNSVPPSQTKSETSWES). A Phosphoserine modification is found at Ser-568. Positions 571–582 (QIKKKKKARRET) are enriched in basic residues.

As to quaternary structure, interacts with BCCIP, CREBBP/CBP and RELA/p65. Widely expressed with highest levels in muscle-dominating organs such as skeletal muscle, heart, tongue and small intestine and in endocrine glands such as thyroid and adrenal gland. Overexpressed in various cancers including breast, brain, prostate, melanoma and glioblastoma multiforme.

It is found in the endoplasmic reticulum membrane. Its subcellular location is the nucleus membrane. It localises to the cell junction. The protein localises to the tight junction. The protein resides in the nucleus. It is found in the nucleolus. Its subcellular location is the cytoplasm. It localises to the perinuclear region. In terms of biological role, down-regulates SLC1A2/EAAT2 promoter activity when expressed ectopically. Activates the nuclear factor kappa-B (NF-kappa-B) transcription factor. Promotes anchorage-independent growth of immortalized melanocytes and astrocytes which is a key component in tumor cell expansion. Promotes lung metastasis and also has an effect on bone and brain metastasis, possibly by enhancing the seeding of tumor cells to the target organ endothelium. Induces chemoresistance. This chain is Protein LYRIC (MTDH), found in Homo sapiens (Human).